The sequence spans 222 residues: MLKAMPASESSGWTLVVPVKTLVAAKTRLSEAAGPHRAALAVAIACDTVEAALSCVIVARIVVVTGDPLAAEALGGVGAHVVGDPEAGLNAALRRGAQEAVRLAPGDAVGALQADLPALRPAELALVLTAAAEFEQAFLPDAADVGTTFYGVRPGVPFTPGFGGESRDRHLRRGAKEICLDGIDSVRRDVDTPDDLRAALALGLGPRTLAMVERIRGGFPSP.

3 residues coordinate phosphoenolpyruvate: T147, G163, and S166.

The protein belongs to the CofC family.

The catalysed reaction is phosphoenolpyruvate + GTP + H(+) = enolpyruvoyl-2-diphospho-5'-guanosine + diphosphate. The protein operates within cofactor biosynthesis; coenzyme F420 biosynthesis. Guanylyltransferase that catalyzes the activation of phosphoenolpyruvate (PEP) as enolpyruvoyl-2-diphospho-5'-guanosine, via the condensation of PEP with GTP. It is involved in the biosynthesis of coenzyme F420, a hydride carrier cofactor. In Streptosporangium roseum (strain ATCC 12428 / DSM 43021 / JCM 3005 / KCTC 9067 / NCIMB 10171 / NRRL 2505 / NI 9100), this protein is Phosphoenolpyruvate guanylyltransferase.